Consider the following 540-residue polypeptide: V-set and immunoglobulin domain-containing protein 10 (540 aa).

A signal peptide spans 1 to 30 (MAAGGSAPEPRVLVCLGALLAGWVAVGLEA). Ig-like C2-type domains follow at residues 31 to 119 (VVIG…WLQV), 123 to 215 (PYQI…RKVT), 223 to 309 (PPPS…VQIR), and 311 to 404 (PSLL…IWLS). At 31 to 413 (VVIGEVHENV…SVKEPLNIGG (383 aa)) the chain is on the extracellular side. N-linked (GlcNAc...) asparagine glycans are attached at residues Asn39, Asn46, Asn70, Asn108, Asn138, Asn171, Asn180, and Asn198. Cys44 and Cys103 are joined by a disulfide. 2 disulfide bridges follow: Cys153–Cys201 and Cys245–Cys290. N-linked (GlcNAc...) asparagine glycosylation occurs at Asn326. Cys331 and Cys388 are joined by a disulfide. A helical transmembrane segment spans residues 414–434 (IVGTIVSLLLLGLAIISGLLL). Over 435–540 (HYSPVFCWKV…DIVQEEDRPV (106 aa)) the chain is Cytoplasmic. Residues 461–477 (DSEEEEEEEEEEEEDAA) show a composition bias toward acidic residues. Disordered regions lie at residues 461 to 500 (DSEEEEEEEEEEEEDAAVGEQEGAREREELPKEIPKQDHI) and 513 to 540 (QMGNGFQDLQDDSSEEQSDIVQEEDRPV). Residues 482-500 (EGAREREELPKEIPKQDHI) are compositionally biased toward basic and acidic residues. Positions 521 to 534 (LQDDSSEEQSDIVQ) are enriched in acidic residues.

It is found in the membrane. The protein is V-set and immunoglobulin domain-containing protein 10 (VSIG10) of Homo sapiens (Human).